Here is a 165-residue protein sequence, read N- to C-terminus: Short form salivary protein D7R1 (165 aa).

An N-terminal signal peptide occupies residues 1 to 21; it reads MFNKLHLVSLLACGLFVIAQA. 3 disulfides stabilise this stretch: cysteine 27/cysteine 59, cysteine 40/cysteine 164, and cysteine 98/cysteine 117. Residues glutamate 28, histidine 56, tyrosine 115, aspartate 132, and glutamate 135 each contribute to the serotonin site. Histamine-binding residues include tyrosine 115, aspartate 132, and glutamate 135.

Belongs to the PBP/GOBP family. In terms of tissue distribution, female salivary gland. Not detected in female carcass without salivary glands. Not detected in male tissues.

The protein resides in the secreted. Functionally, modulates blood feeding of female mosquitoes on vertebrate species by binding and sequestering different mediators involved in the host response. Binds serotonin and histamine. Increases blood clotting time. In Anopheles gambiae (African malaria mosquito), this protein is Short form salivary protein D7R1.